Consider the following 317-residue polypeptide: Putrescine transport system permease protein PotH (317 aa).

Residues 1–31 (MSTLEPAAQSKPPGGFKLWLSQLQMKHGRKL) lie on the Cytoplasmic side of the membrane. The helical transmembrane segment at 32 to 51 (VIALPYIWLILLFLLPFLIV) threads the bilayer. Residues 52–104 (FKISLAEMARAIPPYTELMEWADGQLSITLNLGNFLQLTDDPLYFDAYLQSLQ) are Periplasmic-facing. The 207-residue stretch at 99–305 (YLQSLQVAAI…LLLIVPIMWF (207 aa)) folds into the ABC transmembrane type-1 domain. The chain crosses the membrane as a helical span at residues 105–124 (VAAISTFCCLLIGYPLAWAV). The Cytoplasmic segment spans residues 125 to 133 (AHSKPSTRN). Residues 134 to 153 (ILLLLVILPSWTSFLIRVYA) form a helical membrane-spanning segment. At 154 to 184 (WMGILKNNGVLNNFLLWLGVIDQPLTILHTN) the chain is on the periplasmic side. A helical transmembrane segment spans residues 185-204 (LAVYIGIVYAYVPFMVLPIY). Over 205–239 (TALIRIDYSLVEAALDLGARPLKTFFTVIVPLTKG) the chain is Cytoplasmic. A helical transmembrane segment spans residues 240–259 (GIIAGSMLVFIPAVGEFVIP). At 260–284 (ELLGGPDSIMIGRVLWQEFFNNRDW) the chain is on the periplasmic side. The chain crosses the membrane as a helical span at residues 285-304 (PVASAVAIIMLLLLIVPIMW). At 305-317 (FHKHQQKSVGEHG) the chain is on the cytoplasmic side.

This sequence belongs to the binding-protein-dependent transport system permease family. CysTW subfamily. The complex is composed of two ATP-binding proteins (PotG), two transmembrane proteins (PotH and PotI) and a solute-binding protein (PotF).

Its subcellular location is the cell inner membrane. Transport is feedback inhibited by intracellular polyamines. Part of the ABC transporter complex PotFGHI involved in putrescine uptake. Responsible for the translocation of the substrate across the membrane. Imports putrescine for maintenance of the optimal concentration of polyamines necessary for cell growth in the presence of glucose. The protein is Putrescine transport system permease protein PotH of Escherichia coli (strain K12).